Consider the following 207-residue polypeptide: Ribonuclease HII (207 aa).

Residues 10–199 (RLIAGVDEVG…VRNALLDAEL (190 aa)) enclose the RNase H type-2 domain. 3 residues coordinate a divalent metal cation: Asp-16, Glu-17, and Asp-108.

The protein belongs to the RNase HII family. Requires Mn(2+) as cofactor. Mg(2+) is required as a cofactor.

The protein resides in the cytoplasm. It catalyses the reaction Endonucleolytic cleavage to 5'-phosphomonoester.. In terms of biological role, endonuclease that specifically degrades the RNA of RNA-DNA hybrids. The chain is Ribonuclease HII from Erwinia tasmaniensis (strain DSM 17950 / CFBP 7177 / CIP 109463 / NCPPB 4357 / Et1/99).